The following is a 39-amino-acid chain: Photosystem II reaction center protein L (39 aa).

Residues 18 to 38 form a helical membrane-spanning segment; sequence SLYLGLLSVFVLGILFSSYFF.

The protein belongs to the PsbL family. As to quaternary structure, PSII is composed of 1 copy each of membrane proteins PsbA, PsbB, PsbC, PsbD, PsbE, PsbF, PsbH, PsbI, PsbJ, PsbK, PsbL, PsbM, PsbT, PsbX, PsbY, Psb30/Ycf12, peripheral proteins PsbO, CyanoQ (PsbQ), PsbU, PsbV and a large number of cofactors. It forms dimeric complexes.

The protein localises to the cellular thylakoid membrane. Functionally, one of the components of the core complex of photosystem II (PSII). PSII is a light-driven water:plastoquinone oxidoreductase that uses light energy to abstract electrons from H(2)O, generating O(2) and a proton gradient subsequently used for ATP formation. It consists of a core antenna complex that captures photons, and an electron transfer chain that converts photonic excitation into a charge separation. This subunit is found at the monomer-monomer interface and is required for correct PSII assembly and/or dimerization. The sequence is that of Photosystem II reaction center protein L from Prochlorococcus marinus (strain MIT 9301).